The sequence spans 189 residues: MVKVIASSVRKGNVLDVDGKLYVVLTAQNFHPGKGTPVTQVDMRRISDGVKVSERYRTTEQVERAFVEDREHTFLYEDGEGFHFMNPETYDQLVMSTEDIGDLKAYLQEGMAVMLSIHEGLAIAIDLPRHVTLEIVETEPVVKGQTASSSYKPAVLSNGVRTLVPPHIQAGTRVVIATEDGSYVERAKD.

Belongs to the elongation factor P family.

It is found in the cytoplasm. It functions in the pathway protein biosynthesis; polypeptide chain elongation. In terms of biological role, involved in peptide bond synthesis. Stimulates efficient translation and peptide-bond synthesis on native or reconstituted 70S ribosomes in vitro. Probably functions indirectly by altering the affinity of the ribosome for aminoacyl-tRNA, thus increasing their reactivity as acceptors for peptidyl transferase. The protein is Elongation factor P of Sinorhizobium medicae (strain WSM419) (Ensifer medicae).